Here is a 162-residue protein sequence, read N- to C-terminus: uncharacterized protein (162 aa).

Helical transmembrane passes span 7 to 27 (LIAD…IVGL), 51 to 71 (LSIL…YMIG), and 134 to 154 (TYVA…ITIG).

Belongs to the DedA family.

The protein localises to the cell membrane. This is an uncharacterized protein from Bacillus subtilis (strain 168).